The following is an 859-amino-acid chain: Villin-like protein (859 aa).

6 Gelsolin-like repeats span residues 24–76 (LKML…EARE), 148–188 (VSAT…SEKA), 264–308 (LVVQ…QEKK), 401–450 (LQRQ…EDTK), 521–561 (TRTM…DQRE), and 624–665 (LVLT…WKKE). Residues 793–859 (SMVNGSLPRE…QQAKKKLGFF (67 aa)) form the HP domain.

It belongs to the villin/gelsolin family.

Its function is as follows. Possible tumor suppressor. The chain is Villin-like protein from Mus musculus (Mouse).